A 390-amino-acid polypeptide reads, in one-letter code: Putative MSV199 domain-containing protein 211L (390 aa).

Positions 181 to 263 (HDRKAQEEKE…FDLSDVRDRL (83 aa)) form a coiled coil.

The polypeptide is Putative MSV199 domain-containing protein 211L (Acheta domesticus (House cricket)).